The sequence spans 98 residues: NADH-ubiquinone oxidoreductase chain 4L (98 aa).

3 helical membrane passes run 1-21 (MSIV…GMLI), 29-49 (SLLC…LIIL), and 61-81 (IILL…LVMV).

This sequence belongs to the complex I subunit 4L family. As to quaternary structure, core subunit of respiratory chain NADH dehydrogenase (Complex I) which is composed of 45 different subunits.

It localises to the mitochondrion inner membrane. The catalysed reaction is a ubiquinone + NADH + 5 H(+)(in) = a ubiquinol + NAD(+) + 4 H(+)(out). Core subunit of the mitochondrial membrane respiratory chain NADH dehydrogenase (Complex I) which catalyzes electron transfer from NADH through the respiratory chain, using ubiquinone as an electron acceptor. Part of the enzyme membrane arm which is embedded in the lipid bilayer and involved in proton translocation. The protein is NADH-ubiquinone oxidoreductase chain 4L (MT-ND4L) of Herpestes javanicus (Small Indian mongoose).